The sequence spans 791 residues: Leucine-rich repeat-containing protein SOG2 (791 aa).

Residues 1 to 28 (MVATSSKRTLDPKEEHLPADKTSTNSSN) are disordered. Positions 8-19 (RTLDPKEEHLPA) are enriched in basic and acidic residues. LRR repeat units follow at residues 43 to 64 (SGTT…DVGY), 67 to 88 (NVER…FKRL), 90 to 111 (RLQY…LTQC), 113 to 134 (QLEI…ISSF), 138 to 159 (NIRV…KSIT), and 163 to 183 (KLSI…DQVQ). T214 is subject to Phosphothreonine. Disordered regions lie at residues 454-506 (ASKA…TPSA) and 534-569 (HTHG…PRQQ). The segment covering 469–486 (SSSSITSGGGPAASTTST) has biased composition (low complexity). Residues 544 to 569 (NAISNGSSQTNMNEVKTTSDTIPRQQ) show a composition bias toward polar residues.

The protein resides in the cytoplasm. In terms of biological role, required for proper cell morphogenesis and cell separation after mitosis. Functions in the RAM (regulation of ACE2 activity and cellular morphogenesis) signaling network and is required for proper ACE2 localization and CBK1 kinase activity. The polypeptide is Leucine-rich repeat-containing protein SOG2 (Saccharomyces cerevisiae (strain ATCC 204508 / S288c) (Baker's yeast)).